A 503-amino-acid chain; its full sequence is Maturase K (503 aa).

The protein belongs to the intron maturase 2 family. MatK subfamily.

The protein resides in the plastid. The protein localises to the chloroplast. Its function is as follows. Usually encoded in the trnK tRNA gene intron. Probably assists in splicing its own and other chloroplast group II introns. The chain is Maturase K from Backhousia myrtifolia (Grey myrtle).